The sequence spans 245 residues: Ribonuclease 3 (245 aa).

Positions 19–148 (FRAFQQKLGI…FIGALYLDQG (130 aa)) constitute an RNase III domain. Glu-61 provides a ligand contact to Mg(2+). Residue Asp-65 is part of the active site. 2 residues coordinate Mg(2+): Asp-134 and Glu-137. Glu-137 is an active-site residue. The DRBM domain occupies 174–243 (DYKSQLQELI…AAEALRKLKE (70 aa)).

This sequence belongs to the ribonuclease III family. Homodimer. Requires Mg(2+) as cofactor.

It localises to the cytoplasm. It catalyses the reaction Endonucleolytic cleavage to 5'-phosphomonoester.. Functionally, digests double-stranded RNA. Involved in the processing of primary rRNA transcript to yield the immediate precursors to the large and small rRNAs (23S and 16S). Processes some mRNAs, and tRNAs when they are encoded in the rRNA operon. Processes pre-crRNA and tracrRNA of type II CRISPR loci if present in the organism. This chain is Ribonuclease 3, found in Bacillus cytotoxicus (strain DSM 22905 / CIP 110041 / 391-98 / NVH 391-98).